Here is a 174-residue protein sequence, read N- to C-terminus: RNA pyrophosphohydrolase (174 aa).

Positions 6 to 149 (GFRANVGIII…KRDVYRKVMK (144 aa)) constitute a Nudix hydrolase domain. The short motif at 38 to 59 (GGVDEGESAEQAMYRELYEEVG) is the Nudix box element.

It belongs to the Nudix hydrolase family. RppH subfamily. The cofactor is a divalent metal cation.

Functionally, accelerates the degradation of transcripts by removing pyrophosphate from the 5'-end of triphosphorylated RNA, leading to a more labile monophosphorylated state that can stimulate subsequent ribonuclease cleavage. This is RNA pyrophosphohydrolase from Shewanella loihica (strain ATCC BAA-1088 / PV-4).